Consider the following 103-residue polypeptide: Large ribosomal subunit protein uL24 (103 aa).

This sequence belongs to the universal ribosomal protein uL24 family. As to quaternary structure, part of the 50S ribosomal subunit.

Functionally, one of two assembly initiator proteins, it binds directly to the 5'-end of the 23S rRNA, where it nucleates assembly of the 50S subunit. Its function is as follows. One of the proteins that surrounds the polypeptide exit tunnel on the outside of the subunit. The polypeptide is Large ribosomal subunit protein uL24 (Glaesserella parasuis serovar 5 (strain SH0165) (Haemophilus parasuis)).